The chain runs to 142 residues: Hemoglobin subunit alpha (142 aa).

Residues 2–142 (VLSAADKGNV…VSTVLTSKYR (141 aa)) enclose the Globin domain. Position 4 is a phosphoserine (Ser4). N6-succinyllysine is present on residues Lys8 and Lys12. N6-acetyllysine; alternate is present on Lys17. Lys17 is modified (N6-succinyllysine; alternate). Position 25 is a phosphotyrosine (Tyr25). Ser36 is subject to Phosphoserine. Lys41 carries the N6-succinyllysine modification. Ser50 bears the Phosphoserine mark. O2 is bound at residue His59. Heme b is bound at residue His88. Ser103 carries the post-translational modification Phosphoserine. Thr109 carries the phosphothreonine modification. Ser125 carries the phosphoserine modification. A phosphothreonine mark is found at Thr135 and Thr138. At Ser139 the chain carries Phosphoserine.

Belongs to the globin family. Heterotetramer of two alpha chains and two beta chains. Red blood cells.

Its function is as follows. Involved in oxygen transport from the lung to the various peripheral tissues. In terms of biological role, hemopressin acts as an antagonist peptide of the cannabinoid receptor CNR1. Hemopressin-binding efficiently blocks cannabinoid receptor CNR1 and subsequent signaling. The protein is Hemoglobin subunit alpha (HBA) of Bos taurus (Bovine).